A 570-amino-acid chain; its full sequence is Probable metalloreductase AIM14 (570 aa).

7 consecutive transmembrane segments (helical) span residues 21–41 (IKYG…LALL), 70–90 (AIHL…HYSL), 101–118 (LGRL…LTLR), 142–162 (IITV…AIDD), 177–197 (FVGF…IGPM), 204–224 (LFYI…PIHS), and 230–250 (FPFL…RIVF). In terms of domain architecture, Ferric oxidoreductase spans 101–219 (LGRLSYALIP…NLVNVAFILL (119 aa)). The 139-residue stretch at 250–388 (FAKSLMILNK…GGSGISFALP (139 aa)) folds into the FAD-binding FR-type domain. The segment covering 481-505 (SNFNSENADSNDNTPETSHSPTKEN) has biased composition (polar residues). The segment at 481 to 507 (SNFNSENADSNDNTPETSHSPTKENGS) is disordered.

It belongs to the ferric reductase (FRE) family. AIM14 subfamily. Interacts with ribosomes.

The protein localises to the membrane. In terms of biological role, probable cell surface metalloreductase. May be involved in iron or copper homeostasis. The sequence is that of Probable metalloreductase AIM14 (AIM14) from Saccharomyces cerevisiae (strain RM11-1a) (Baker's yeast).